A 185-amino-acid polypeptide reads, in one-letter code: Large ribosomal subunit protein uL5 (185 aa).

Belongs to the universal ribosomal protein uL5 family. In terms of assembly, part of the 50S ribosomal subunit; part of the 5S rRNA/L5/L18/L25 subcomplex. Contacts the 5S rRNA and the P site tRNA. Forms a bridge to the 30S subunit in the 70S ribosome.

This is one of the proteins that bind and probably mediate the attachment of the 5S RNA into the large ribosomal subunit, where it forms part of the central protuberance. In the 70S ribosome it contacts protein S13 of the 30S subunit (bridge B1b), connecting the 2 subunits; this bridge is implicated in subunit movement. Contacts the P site tRNA; the 5S rRNA and some of its associated proteins might help stabilize positioning of ribosome-bound tRNAs. The polypeptide is Large ribosomal subunit protein uL5 (Rhizobium johnstonii (strain DSM 114642 / LMG 32736 / 3841) (Rhizobium leguminosarum bv. viciae)).